A 98-amino-acid polypeptide reads, in one-letter code: Acylphosphatase (98 aa).

Residues 12–98 enclose the Acylphosphatase-like domain; that stretch reads RLSAWVHGHV…DATMTGFSER (87 aa). Active-site residues include Arg-27 and Asn-45.

This sequence belongs to the acylphosphatase family.

The enzyme catalyses an acyl phosphate + H2O = a carboxylate + phosphate + H(+). In Mycolicibacterium smegmatis (strain ATCC 700084 / mc(2)155) (Mycobacterium smegmatis), this protein is Acylphosphatase (acyP).